A 142-amino-acid polypeptide reads, in one-letter code: Transcriptional regulator MraZ (142 aa).

SpoVT-AbrB domains follow at residues 5-48 (EFEY…PLCE) and 77-120 (AFDV…DKET).

Belongs to the MraZ family. In terms of assembly, forms oligomers.

The protein localises to the cytoplasm. It localises to the nucleoid. The sequence is that of Transcriptional regulator MraZ from Dehalococcoides mccartyi (strain ATCC BAA-2100 / JCM 16839 / KCTC 5957 / BAV1).